The chain runs to 349 residues: Ion-translocating oxidoreductase complex subunit D (349 aa).

A run of 3 helical transmembrane segments spans residues 20–42 (VMQR…FGWG), 77–99 (SAML…WMIV), and 124–144 (AMAA…TWIA). T185 is modified (FMN phosphoryl threonine). A run of 5 helical transmembrane segments spans residues 212–232 (STGV…LVLL), 239–259 (WHIS…GFLL), 265–285 (ASPL…FIAT), 291–311 (ATSP…VYII), and 315–335 (GGYP…APFI).

Belongs to the NqrB/RnfD family. As to quaternary structure, the complex is composed of six subunits: RnfA, RnfB, RnfC, RnfD, RnfE and RnfG. Requires FMN as cofactor.

It localises to the cell inner membrane. Functionally, part of a membrane-bound complex that couples electron transfer with translocation of ions across the membrane. The chain is Ion-translocating oxidoreductase complex subunit D from Shewanella baltica (strain OS185).